Here is a 306-residue protein sequence, read N- to C-terminus: Aspartate carbamoyltransferase catalytic subunit (306 aa).

Carbamoyl phosphate contacts are provided by arginine 54 and threonine 55. Lysine 83 provides a ligand contact to L-aspartate. Positions 104, 132, and 135 each coordinate carbamoyl phosphate. 2 residues coordinate L-aspartate: arginine 165 and arginine 227. Carbamoyl phosphate is bound by residues leucine 266 and proline 267.

Belongs to the aspartate/ornithine carbamoyltransferase superfamily. ATCase family. Heterododecamer (2C3:3R2) of six catalytic PyrB chains organized as two trimers (C3), and six regulatory PyrI chains organized as three dimers (R2).

The catalysed reaction is carbamoyl phosphate + L-aspartate = N-carbamoyl-L-aspartate + phosphate + H(+). It functions in the pathway pyrimidine metabolism; UMP biosynthesis via de novo pathway; (S)-dihydroorotate from bicarbonate: step 2/3. Catalyzes the condensation of carbamoyl phosphate and aspartate to form carbamoyl aspartate and inorganic phosphate, the committed step in the de novo pyrimidine nucleotide biosynthesis pathway. The chain is Aspartate carbamoyltransferase catalytic subunit from Clostridium kluyveri (strain NBRC 12016).